Here is a 269-residue protein sequence, read N- to C-terminus: Tryptophan synthase alpha chain (269 aa).

Catalysis depends on proton acceptor residues Glu-49 and Asp-60.

The protein belongs to the TrpA family. Tetramer of two alpha and two beta chains.

It catalyses the reaction (1S,2R)-1-C-(indol-3-yl)glycerol 3-phosphate + L-serine = D-glyceraldehyde 3-phosphate + L-tryptophan + H2O. Its pathway is amino-acid biosynthesis; L-tryptophan biosynthesis; L-tryptophan from chorismate: step 5/5. The alpha subunit is responsible for the aldol cleavage of indoleglycerol phosphate to indole and glyceraldehyde 3-phosphate. The chain is Tryptophan synthase alpha chain from Stutzerimonas stutzeri (strain A1501) (Pseudomonas stutzeri).